The primary structure comprises 457 residues: Siroheme synthase (457 aa).

The precorrin-2 dehydrogenase /sirohydrochlorin ferrochelatase stretch occupies residues M1–T204. NAD(+) contacts are provided by residues D22–V23 and L43–A44. Residue S128 is modified to Phosphoserine. Residues G216–H457 form a uroporphyrinogen-III C-methyltransferase region. P225 lines the S-adenosyl-L-methionine pocket. D248 functions as the Proton acceptor in the catalytic mechanism. The active-site Proton donor is K270. Residues G301 to D303, I306, T331 to A332, M382, and G411 contribute to the S-adenosyl-L-methionine site.

In the N-terminal section; belongs to the precorrin-2 dehydrogenase / sirohydrochlorin ferrochelatase family. This sequence in the C-terminal section; belongs to the precorrin methyltransferase family.

The catalysed reaction is uroporphyrinogen III + 2 S-adenosyl-L-methionine = precorrin-2 + 2 S-adenosyl-L-homocysteine + H(+). It catalyses the reaction precorrin-2 + NAD(+) = sirohydrochlorin + NADH + 2 H(+). The enzyme catalyses siroheme + 2 H(+) = sirohydrochlorin + Fe(2+). Its pathway is cofactor biosynthesis; adenosylcobalamin biosynthesis; precorrin-2 from uroporphyrinogen III: step 1/1. It participates in cofactor biosynthesis; adenosylcobalamin biosynthesis; sirohydrochlorin from precorrin-2: step 1/1. The protein operates within porphyrin-containing compound metabolism; siroheme biosynthesis; precorrin-2 from uroporphyrinogen III: step 1/1. It functions in the pathway porphyrin-containing compound metabolism; siroheme biosynthesis; siroheme from sirohydrochlorin: step 1/1. Its pathway is porphyrin-containing compound metabolism; siroheme biosynthesis; sirohydrochlorin from precorrin-2: step 1/1. Multifunctional enzyme that catalyzes the SAM-dependent methylations of uroporphyrinogen III at position C-2 and C-7 to form precorrin-2 via precorrin-1. Then it catalyzes the NAD-dependent ring dehydrogenation of precorrin-2 to yield sirohydrochlorin. Finally, it catalyzes the ferrochelation of sirohydrochlorin to yield siroheme. This is Siroheme synthase from Citrobacter koseri (strain ATCC BAA-895 / CDC 4225-83 / SGSC4696).